Reading from the N-terminus, the 409-residue chain is Tryptophan synthase beta chain (409 aa).

Lys-95 carries the N6-(pyridoxal phosphate)lysine modification.

This sequence belongs to the TrpB family. In terms of assembly, tetramer of two alpha and two beta chains. Pyridoxal 5'-phosphate is required as a cofactor.

The enzyme catalyses (1S,2R)-1-C-(indol-3-yl)glycerol 3-phosphate + L-serine = D-glyceraldehyde 3-phosphate + L-tryptophan + H2O. Its pathway is amino-acid biosynthesis; L-tryptophan biosynthesis; L-tryptophan from chorismate: step 5/5. In terms of biological role, the beta subunit is responsible for the synthesis of L-tryptophan from indole and L-serine. In Pseudomonas syringae pv. syringae (strain B728a), this protein is Tryptophan synthase beta chain.